The sequence spans 393 residues: SH3 domain-binding protein 5-like (393 aa).

The interval 1–58 (MAELRQVPGGRETPQGELRPEVVEDEVPRSPVAEEPGGGGSSSSEAKLSPREEEELDP) is disordered. At Thr13 the chain carries Phosphothreonine. Residues 18 to 28 (LRPEVVEDEVP) show a composition bias toward basic and acidic residues. Ser30 and Ser49 each carry phosphoserine. 2 coiled-coil regions span residues 59–140 (RIQE…YERA) and 169–272 (WQEM…EQIH). The interval 273-332 (ARRRGGLPPHPLGPRRSSPVGAEAGPEDMEDGDSGIEGAEGAGLEEGSSLGPGPAPDTDT) is disordered. Acidic residues predominate over residues 297–306 (GPEDMEDGDS). Residues 317 to 332 (EEGSSLGPGPAPDTDT) are compositionally biased toward low complexity. Residues Ser343, Ser350, Ser358, Ser362, and Ser378 each carry the phosphoserine modification. The interval 362 to 393 (SLDGQELGTRSGGRRGSDGGARGGRHQRSVSL) is disordered. Residues 384–393 (GGRHQRSVSL) are compositionally biased toward basic residues.

The protein belongs to the SH3BP5 family.

Functions as a guanine nucleotide exchange factor (GEF) for RAB11A. The polypeptide is SH3 domain-binding protein 5-like (SH3BP5L) (Homo sapiens (Human)).